We begin with the raw amino-acid sequence, 147 residues long: Large ribosomal subunit protein uL16 (147 aa).

This sequence belongs to the universal ribosomal protein uL16 family. Part of the 50S ribosomal subunit.

Its function is as follows. Binds 23S rRNA and is also seen to make contacts with the A and possibly P site tRNAs. In Caldicellulosiruptor bescii (strain ATCC BAA-1888 / DSM 6725 / KCTC 15123 / Z-1320) (Anaerocellum thermophilum), this protein is Large ribosomal subunit protein uL16.